Reading from the N-terminus, the 330-residue chain is Ferredoxin--NADP reductase (330 aa).

Residues Glu-35, Gln-43, Tyr-48, Val-90, Phe-123, Asp-285, and Thr-326 each contribute to the FAD site.

Belongs to the ferredoxin--NADP reductase type 2 family. Homodimer. The cofactor is FAD.

It carries out the reaction 2 reduced [2Fe-2S]-[ferredoxin] + NADP(+) + H(+) = 2 oxidized [2Fe-2S]-[ferredoxin] + NADPH. This chain is Ferredoxin--NADP reductase, found in Streptococcus pyogenes serotype M1.